We begin with the raw amino-acid sequence, 858 residues long: Ubiquitin carboxyl-terminal hydrolase 13 (858 aa).

The residue at position 112 (Ser-112) is a Phosphoserine. The UBP-type; degenerate zinc-finger motif lies at 185 to 293 (PVSKYANNLV…KHLAHFGIDM (109 aa)). Zn(2+)-binding residues include Cys-209, Cys-212, Cys-229, and His-242. Lys-309 is covalently cross-linked (Glycyl lysine isopeptide (Lys-Gly) (interchain with G-Cter in SUMO2)). A USP domain is found at 334–856 (TGLKNLGNSC…LGYMYFYRRI (523 aa)). The active-site Nucleophile is Cys-343. A Glycyl lysine isopeptide (Lys-Gly) (interchain with G-Cter in SUMO2) cross-link involves residue Lys-403. 2 consecutive UBA domains span residues 650–691 (DIDE…IIVH) and 722–762 (QPPE…IFSH). Catalysis depends on His-818, which acts as the Proton acceptor.

The protein belongs to the peptidase C19 family. As to quaternary structure, interacts with UFD1. Interacts (via UBA domains) with SIAH2 (when ubiquitinated). Interacts with BAG6; the interaction is direct and may mediate UBL4A deubiquitination. Interacts (via UBA 2 domain) with AMFR; the interaction is direct. Interacts with UBL4A; may be indirect via BAG6. Interacts with NEDD4.

The protein resides in the cytoplasm. The catalysed reaction is Thiol-dependent hydrolysis of ester, thioester, amide, peptide and isopeptide bonds formed by the C-terminal Gly of ubiquitin (a 76-residue protein attached to proteins as an intracellular targeting signal).. With respect to regulation, specifically inhibited by spautin-1 (specific and potent autophagy inhibitor-1), a derivative of MBCQ that binds to USP13 and inhibits deubiquitinase activity. Regulated by PIK3C3/VPS34-containing complexes. The weak deubiquitinase activity in vitro suggests the existence of some mechanism that activates the enzyme. Deubiquitinase that mediates deubiquitination of target proteins such as BECN1, MITF, SKP2 and USP10 and is involved in various processes such as autophagy, endoplasmic reticulum-associated degradation (ERAD), cell cycle progression or DNA damage response. Component of a regulatory loop that controls autophagy and p53/TP53 levels: mediates deubiquitination of BECN1, a key regulator of autophagy, leading to stabilize the PIK3C3/VPS34-containing complexes. Alternatively, forms with NEDD4 a deubiquitination complex, which subsequently stabilizes VPS34 to promote autophagy. Also deubiquitinates USP10, an essential regulator of p53/TP53 stability. In turn, PIK3C3/VPS34-containing complexes regulate USP13 stability, suggesting the existence of a regulatory system by which PIK3C3/VPS34-containing complexes regulate p53/TP53 protein levels via USP10 and USP13. Recruited by nuclear UFD1 and mediates deubiquitination of SKP2, thereby regulating endoplasmic reticulum-associated degradation (ERAD). Also regulates ERAD through the deubiquitination of UBL4A a component of the BAG6/BAT3 complex. Mediates stabilization of SIAH2 independently of deubiquitinase activity: binds ubiquitinated SIAH2 and acts by impairing SIAH2 autoubiquitination. Regulates the cell cycle progression by stabilizing cell cycle proteins such as SKP2 and AURKB. In addition, plays an important role in maintaining genomic stability and in DNA replication checkpoint activation via regulation of RAP80 and TOPBP1. Deubiquitinates the multifunctional protein HMGB1 and subsequently drives its nucleocytoplasmic localization and its secretion. Positively regulates type I and type II interferon signalings by deubiquitinating STAT1 but negatively regulates antiviral response by deubiquitinating STING1. The protein is Ubiquitin carboxyl-terminal hydrolase 13 (Usp13) of Mus musculus (Mouse).